The sequence spans 239 residues: Sensory rhodopsin-2 (239 aa).

Residues 1 to 3 are Extracellular-facing; sequence MVG. A helical membrane pass occupies residues 4 to 25; sequence LTTLFWLGAIGMLVGTLAFAWA. At 26 to 33 the chain is on the cytoplasmic side; the sequence is GRDAGSGE. The chain crosses the membrane as a helical span at residues 34 to 55; that stretch reads RRYYVTLVGISGIAAVAYVVMA. Residues 56–69 are Extracellular-facing; that stretch reads LGVGWVPVAERTVF. Residues 70 to 91 form a helical membrane-spanning segment; the sequence is APRYIDWILTTPLIVYFLGLLA. At 92-94 the chain is on the cytoplasmic side; sequence GLD. A helical transmembrane segment spans residues 95 to 117; that stretch reads SREFGIVITLNTVVMLAGFAGAM. The Extracellular segment spans residues 118–121; sequence VPGI. Residues 122 to 149 traverse the membrane as a helical segment; that stretch reads ERYALFGMGAVAFLGLVYYLVGPMTESA. Topologically, residues 150–153 are cytoplasmic; sequence SQRS. Residues 154–181 form a helical membrane-spanning segment; sequence SGIKSLYVRLRNLTVILWAIYPFIWLLG. The Extracellular portion of the chain corresponds to 182–189; sequence PPGVALLT. The helical transmembrane segment at 190–222 threads the bilayer; it reads PTVDVALIVYLDLVTKVGFGFIALDAAATLRAE. K205 is modified (N6-(retinylidene)lysine). Over 223-239 the chain is Cytoplasmic; sequence HGESLAGVDTDAPAVAD.

It belongs to the archaeal/bacterial/fungal opsin family. As to quaternary structure, homodimer. Interacts with HTR-II.

Its subcellular location is the cell membrane. Photophobic photoreceptor responsible for the negative phototaxis. Activates the sensory rhodopsin II transducer (HTR-II) in response to blue light. The chain is Sensory rhodopsin-2 (sop2) from Natronomonas pharaonis (Natronobacterium pharaonis).